The sequence spans 592 residues: Protein kinase C zeta type (592 aa).

The PB1 domain maps to 15–98 (RVRLKAHYGG…EVLIIHVFPS (84 aa)). Residues 79–145 (AFRLACQGRD…KRFNRRAYCG (67 aa)) are interaction with SQSTM1. The segment at 130-180 (GHLFQAKRFNRRAYCGQCSERIWGLARQGYRCINCKLLVHKRCHVLVPLTC) adopts a Phorbol-ester/DAG-type zinc-finger fold. The region spanning 252 to 518 (FDLIRVIGRG…FSDIKSHAFF (267 aa)) is the Protein kinase domain. Residues 258 to 266 (IGRGSYAKV) and Lys-281 each bind ATP. Asp-376 (proton acceptor) is an active-site residue. Thr-410 carries the post-translational modification Phosphothreonine; by PDPK1 and PI3K. The region spanning 519 to 590 (RSIDWDLLEK…INPLLLSAEE (72 aa)) is the AGC-kinase C-terminal domain. Thr-560 is subject to Phosphothreonine. Ser-591 bears the Phosphoserine mark.

The protein belongs to the protein kinase superfamily. AGC Ser/Thr protein kinase family. PKC subfamily. Interacts with PARD6A, PARD6B and PARD6G. Part of a complex with PARD3, PARD6A or PARD6B or PARD6G and CDC42 or RAC1. Interacts with ADAP1/CENTA1. Forms a ternary complex with SQSTM1 and KCNAB2. Forms another ternary complex with SQSTM1 and GABRR3. Forms a complex with SQSTM1 and MAP2K5. Interacts (via the protein kinase domain) with WWC1. Forms a tripartite complex with WWC1 and DDR1, but predominantly in the absence of collagen. Component of the Par polarity complex, composed of at least phosphorylated PRKCZ, PARD3 and TIAM1. Interacts with PDPK1 (via N-terminal region). Interacts with WDFY2 (via WD repeats 1-3). Interacts with VAMP2. Forms a complex with WDFY2 and VAMP2. Interacts with APPL1. Interacts with WWC1, WWC2 and WWC3. In terms of processing, CDH5 is required for its phosphorylation at Thr-410. Phosphorylated by protein kinase PDPK1; phosphorylation is inhibited by the apoptotic C-terminal cleavage product of PKN2. Phosphorylation at Thr-410 by PI3K activates the kinase. Isoform 1: In brain, expressed in hippocampus, neocortex and cerebellum (at protein level). Also expressed in lung, liver, kidney, testis and to a lesser extent in pancreas, intestine and skin (at protein level). Isoform 2: Specifically expressed in brain where it localizes to the hippocampus, neocortex and cerebellum (at protein level).

It is found in the cytoplasm. The protein localises to the endosome. Its subcellular location is the cell junction. The protein resides in the membrane. It carries out the reaction L-seryl-[protein] + ATP = O-phospho-L-seryl-[protein] + ADP + H(+). It catalyses the reaction L-threonyl-[protein] + ATP = O-phospho-L-threonyl-[protein] + ADP + H(+). Atypical PKCs (PRKCI and PRKCZ) exhibit an elevated basal enzymatic activity (that may be due to the interaction with SMG1 or SQSTM1) and are not regulated by diacylglycerol, phosphatidylserine, phorbol esters or calcium ions. Two specific sites, Thr-410 (activation loop of the kinase domain) and Thr-560 (turn motif), need to be phosphorylated for its full activation. Phosphatidylinositol 3,4,5-trisphosphate might be a physiological activator. Isoform 2: Constitutively active. Functionally, calcium- and diacylglycerol-independent serine/threonine-protein kinase that functions in phosphatidylinositol 3-kinase (PI3K) pathway and mitogen-activated protein (MAP) kinase cascade, and is involved in NF-kappa-B activation, mitogenic signaling, cell proliferation, cell polarity, inflammatory response and maintenance of long-term potentiation (LTP). Upon lipopolysaccharide (LPS) treatment in macrophages, or following mitogenic stimuli, functions downstream of PI3K to activate MAP2K1/MEK1-MAPK1/ERK2 signaling cascade independently of RAF1 activation. Required for insulin-dependent activation of AKT3, but may function as an adapter rather than a direct activator. Upon insulin treatment may act as a downstream effector of PI3K and contribute to the activation of translocation of the glucose transporter SLC2A4/GLUT4 and subsequent glucose transport in adipocytes. In EGF-induced cells, binds and activates MAP2K5/MEK5-MAPK7/ERK5 independently of its kinase activity and can activate JUN promoter through MEF2C. Through binding with SQSTM1/p62, functions in interleukin-1 signaling and activation of NF-kappa-B with the specific adapters RIPK1 and TRAF6. Participates in TNF-dependent transactivation of NF-kappa-B by phosphorylating and activating IKBKB kinase, which in turn leads to the degradation of NF-kappa-B inhibitors. In migrating astrocytes, forms a cytoplasmic complex with PARD6A and is recruited by CDC42 to function in the establishment of cell polarity along with the microtubule motor and dynein. In association with FEZ1, stimulates neuronal differentiation in PC12 cells. In the inflammatory response, is required for the T-helper 2 (Th2) differentiation process, including interleukin production, efficient activation of JAK1 and the subsequent phosphorylation and nuclear translocation of STAT6. May be involved in development of allergic airway inflammation (asthma), a process dependent on Th2 immune response. In the NF-kappa-B-mediated inflammatory response, can relieve SETD6-dependent repression of NF-kappa-B target genes by phosphorylating the RELA subunit at 'Ser-311'. Phosphorylates VAMP2 in vitro. Phosphorylates and activates LRRK1, which phosphorylates RAB proteins involved in intracellular trafficking. In terms of biological role, involved in late synaptic long term potentiation phase in CA1 hippocampal cells and long term memory maintenance. This chain is Protein kinase C zeta type (Prkcz), found in Rattus norvegicus (Rat).